The chain runs to 270 residues: UPF0354 protein BCA_4815 (270 aa).

Belongs to the UPF0354 family.

The chain is UPF0354 protein BCA_4815 from Bacillus cereus (strain 03BB102).